The chain runs to 484 residues: Glycogen synthase (484 aa).

K15 lines the ADP-alpha-D-glucose pocket.

It belongs to the glycosyltransferase 1 family. Bacterial/plant glycogen synthase subfamily.

The enzyme catalyses [(1-&gt;4)-alpha-D-glucosyl](n) + ADP-alpha-D-glucose = [(1-&gt;4)-alpha-D-glucosyl](n+1) + ADP + H(+). It functions in the pathway glycan biosynthesis; glycogen biosynthesis. Its function is as follows. Synthesizes alpha-1,4-glucan chains using ADP-glucose. The sequence is that of Glycogen synthase from Geotalea uraniireducens (strain Rf4) (Geobacter uraniireducens).